Reading from the N-terminus, the 88-residue chain is MASKKGVGSTKDGRDSIAKRLGAKRADGQFVTGGSILYRQRGTKVHPGLNVGRGGDDTLYAKIDGIVRFERLGRDRKRVSVYPVSQEA.

Positions 1 to 20 are disordered; the sequence is MASKKGVGSTKDGRDSIAKR.

It belongs to the bacterial ribosomal protein bL27 family.

In Geobacillus stearothermophilus (Bacillus stearothermophilus), this protein is Large ribosomal subunit protein bL27 (rpmA).